The primary structure comprises 237 residues: Phosphatidylserine decarboxylase proenzyme (237 aa).

The active-site Schiff-base intermediate with substrate; via pyruvic acid is the Ser-206. The residue at position 206 (Ser-206) is a Pyruvic acid (Ser); by autocatalysis.

Belongs to the phosphatidylserine decarboxylase family. PSD-A subfamily. As to quaternary structure, heterodimer of a large membrane-associated beta subunit and a small pyruvoyl-containing alpha subunit. Pyruvate is required as a cofactor. In terms of processing, is synthesized initially as an inactive proenzyme. Formation of the active enzyme involves a self-maturation process in which the active site pyruvoyl group is generated from an internal serine residue via an autocatalytic post-translational modification. Two non-identical subunits are generated from the proenzyme in this reaction, and the pyruvate is formed at the N-terminus of the alpha chain, which is derived from the carboxyl end of the proenzyme. The post-translation cleavage follows an unusual pathway, termed non-hydrolytic serinolysis, in which the side chain hydroxyl group of the serine supplies its oxygen atom to form the C-terminus of the beta chain, while the remainder of the serine residue undergoes an oxidative deamination to produce ammonia and the pyruvoyl prosthetic group on the alpha chain.

The protein localises to the cell membrane. The catalysed reaction is a 1,2-diacyl-sn-glycero-3-phospho-L-serine + H(+) = a 1,2-diacyl-sn-glycero-3-phosphoethanolamine + CO2. Its pathway is phospholipid metabolism; phosphatidylethanolamine biosynthesis; phosphatidylethanolamine from CDP-diacylglycerol: step 2/2. Functionally, catalyzes the formation of phosphatidylethanolamine (PtdEtn) from phosphatidylserine (PtdSer). The sequence is that of Phosphatidylserine decarboxylase proenzyme from Rhodococcus erythropolis (strain PR4 / NBRC 100887).